A 320-amino-acid polypeptide reads, in one-letter code: Biotin synthase 2 (320 aa).

Residues 34-261 (NVVQCSKLLS…ASYVRLSAGR (228 aa)) enclose the Radical SAM core domain. 3 residues coordinate [4Fe-4S] cluster: cysteine 49, cysteine 53, and cysteine 56. [2Fe-2S] cluster is bound by residues cysteine 93, cysteine 124, cysteine 184, and arginine 256.

The protein belongs to the radical SAM superfamily. Biotin synthase family. In terms of assembly, homodimer. The cofactor is [4Fe-4S] cluster. It depends on [2Fe-2S] cluster as a cofactor.

The catalysed reaction is (4R,5S)-dethiobiotin + (sulfur carrier)-SH + 2 reduced [2Fe-2S]-[ferredoxin] + 2 S-adenosyl-L-methionine = (sulfur carrier)-H + biotin + 2 5'-deoxyadenosine + 2 L-methionine + 2 oxidized [2Fe-2S]-[ferredoxin]. It participates in cofactor biosynthesis; biotin biosynthesis; biotin from 7,8-diaminononanoate: step 2/2. In terms of biological role, catalyzes the conversion of dethiobiotin (DTB) to biotin by the insertion of a sulfur atom into dethiobiotin via a radical-based mechanism. This is Biotin synthase 2 from Paracoccus denitrificans (strain Pd 1222).